Consider the following 455-residue polypeptide: EP1-like glycoprotein 1 (455 aa).

The first 22 residues, 1–22, serve as a signal peptide directing secretion; it reads MLRFDYLLITALAISTVSVVMA. The 121-residue stretch at 43–163 folds into the Bulb-type lectin domain; the sequence is TEYDASYRFL…HGKFVWQSFD (121 aa). Asparagine 106, asparagine 191, asparagine 211, asparagine 241, and asparagine 289 each carry an N-linked (GlcNAc...) asparagine glycan. Cysteine 374 carries the post-translational modification S-nitrosocysteine. The 82-residue stretch at 374–455 folds into the PAN domain; the sequence is CSGGKGKAVN…NTSSVAYIKY (82 aa). Cystine bridges form between cysteine 410-cysteine 432 and cysteine 414-cysteine 420. N-linked (GlcNAc...) asparagine glycosylation is present at asparagine 446.

Its subcellular location is the secreted. The protein localises to the cell wall. The polypeptide is EP1-like glycoprotein 1 (Arabidopsis thaliana (Mouse-ear cress)).